A 375-amino-acid chain; its full sequence is MSNTIAYFDITIANEPAGRLTFELFDDVVPKTANNFKHLCIGDKTNEAGVKLAYAGSSFHRCIKGFMLQGGDFTRGDGTGGESIYGEKFEDENFELKHDKPMLLSMANAGPGTNGSQFFITTVPTPHLDGKHVVFGRVIYNRSLVRRIENIPTTSDRPDQEVTISSAGVLSPDEFAQLEAERQAKQAGSDGGDIWEDWPQDEEGVDAEKPEEALVVAGKLKEVGTKEFKAGNFAVALDKYQKALRYLDVHPVLPNDSPAELVESFRSLRLPLLTNAALCALKLPASPNTSSLVVSLTSRALTLPNLSASEKGKALYRRAQAYVLKKDDEAAEKDLKGALECVPGDAGVIKLLKDVEAKRKARREKERQAFAKMFG.

In terms of domain architecture, PPIase cyclophilin-type spans 7 to 169 (YFDITIANEP…QEVTISSAGV (163 aa)). TPR repeat units follow at residues 217 to 250 (AGKLKEVGTKEFKAGNFAVALDKYQKALRYLDVH), 270 to 307 (LPLLTNAALCALKLPASPNTSSLVVSLTSRALTLPNLS), and 312 to 345 (GKALYRRAQAYVLKKDDEAAEKDLKGALECVPGD).

Belongs to the cyclophilin-type PPIase family. PPIase D subfamily.

The protein resides in the cytoplasm. The catalysed reaction is [protein]-peptidylproline (omega=180) = [protein]-peptidylproline (omega=0). In terms of biological role, PPIases accelerate the folding of proteins. It catalyzes the cis-trans isomerization of proline imidic peptide bonds in oligopeptides. In Cryptococcus neoformans var. neoformans serotype D (strain B-3501A) (Filobasidiella neoformans), this protein is Peptidyl-prolyl cis-trans isomerase D (CPR6).